A 251-amino-acid chain; its full sequence is uncharacterized protein (251 aa).

Disordered regions lie at residues 1 to 93 (MQPG…ASPG), 107 to 152 (GLRS…SRPQ), 169 to 188 (PSSI…VSLS), and 224 to 251 (LQAQ…STPS). Over residues 225 to 234 (QAQNLPSSGP) the composition is skewed to polar residues.

This is an uncharacterized protein from Homo sapiens (Human).